The chain runs to 92 residues: Small ribosomal subunit protein uS17 (92 aa).

This sequence belongs to the universal ribosomal protein uS17 family. In terms of assembly, part of the 30S ribosomal subunit.

In terms of biological role, one of the primary rRNA binding proteins, it binds specifically to the 5'-end of 16S ribosomal RNA. This Mycoplasma mobile (strain ATCC 43663 / 163K / NCTC 11711) (Mesomycoplasma mobile) protein is Small ribosomal subunit protein uS17.